The following is a 270-amino-acid chain: Bis(5'-nucleosyl)-tetraphosphatase, symmetrical (270 aa).

The protein belongs to the Ap4A hydrolase family.

The catalysed reaction is P(1),P(4)-bis(5'-adenosyl) tetraphosphate + H2O = 2 ADP + 2 H(+). Hydrolyzes diadenosine 5',5'''-P1,P4-tetraphosphate to yield ADP. The protein is Bis(5'-nucleosyl)-tetraphosphatase, symmetrical of Haemophilus ducreyi (strain 35000HP / ATCC 700724).